Consider the following 67-residue polypeptide: Neurotoxin Cex10 (67 aa).

The LCN-type CS-alpha/beta domain maps to 1–65 (KDGYLVEVTG…TWPLPNKSCG (65 aa)). Cystine bridges form between cysteine 11-cysteine 64, cysteine 15-cysteine 40, cysteine 24-cysteine 45, and cysteine 28-cysteine 47. Cysteine 64 is modified (cysteine amide). A propeptide spanning residues 65 to 67 (GKK) is cleaved from the precursor.

This sequence belongs to the long (4 C-C) scorpion toxin superfamily. Sodium channel inhibitor family. Beta subfamily. As to expression, expressed by the venom gland.

Its subcellular location is the secreted. Beta toxins bind voltage-independently at site-4 of sodium channels (Nav) and shift the voltage of activation toward more negative potentials thereby affecting sodium channel activation and promoting spontaneous and repetitive firing. This is Neurotoxin Cex10 from Centruroides exilicauda (Bark scorpion).